A 180-amino-acid polypeptide reads, in one-letter code: Adenine phosphoribosyltransferase (180 aa).

The protein belongs to the purine/pyrimidine phosphoribosyltransferase family. Homodimer.

The protein localises to the cytoplasm. It catalyses the reaction AMP + diphosphate = 5-phospho-alpha-D-ribose 1-diphosphate + adenine. Its pathway is purine metabolism; AMP biosynthesis via salvage pathway; AMP from adenine: step 1/1. Catalyzes a salvage reaction resulting in the formation of AMP, that is energically less costly than de novo synthesis. This chain is Adenine phosphoribosyltransferase, found in Butyrivibrio fibrisolvens.